The following is a 323-amino-acid chain: Ig gamma chain C region (323 aa).

Ig-like domains are found at residues 6–96 (PSVF…KTVA), 114–213 (PSVF…KTIS), and 222–318 (PKVY…KSIS).

In Oryctolagus cuniculus (Rabbit), this protein is Ig gamma chain C region.